The primary structure comprises 208 residues: ATP-dependent Clp protease proteolytic subunit (208 aa).

The Nucleophile role is filled by Ser-111. His-136 is an active-site residue.

Belongs to the peptidase S14 family. As to quaternary structure, fourteen ClpP subunits assemble into 2 heptameric rings which stack back to back to give a disk-like structure with a central cavity, resembling the structure of eukaryotic proteasomes.

The protein localises to the cytoplasm. The catalysed reaction is Hydrolysis of proteins to small peptides in the presence of ATP and magnesium. alpha-casein is the usual test substrate. In the absence of ATP, only oligopeptides shorter than five residues are hydrolyzed (such as succinyl-Leu-Tyr-|-NHMec, and Leu-Tyr-Leu-|-Tyr-Trp, in which cleavage of the -Tyr-|-Leu- and -Tyr-|-Trp bonds also occurs).. Cleaves peptides in various proteins in a process that requires ATP hydrolysis. Has a chymotrypsin-like activity. Plays a major role in the degradation of misfolded proteins. The protein is ATP-dependent Clp protease proteolytic subunit of Vibrio campbellii (strain ATCC BAA-1116).